We begin with the raw amino-acid sequence, 154 residues long: Endoribonuclease YbeY (154 aa).

Zn(2+) contacts are provided by His-120, His-124, and His-130.

The protein belongs to the endoribonuclease YbeY family. It depends on Zn(2+) as a cofactor.

The protein resides in the cytoplasm. Single strand-specific metallo-endoribonuclease involved in late-stage 70S ribosome quality control and in maturation of the 3' terminus of the 16S rRNA. The polypeptide is Endoribonuclease YbeY (Leptospira biflexa serovar Patoc (strain Patoc 1 / Ames)).